A 363-amino-acid polypeptide reads, in one-letter code: tRNA(Met) cytidine acetate ligase (363 aa).

ATP contacts are provided by residues 7–20 (IAEFNPFHNGHKYL), Gly-96, Asn-152, and Arg-175.

Belongs to the TmcAL family.

The protein localises to the cytoplasm. It carries out the reaction cytidine(34) in elongator tRNA(Met) + acetate + ATP = N(4)-acetylcytidine(34) in elongator tRNA(Met) + AMP + diphosphate. Functionally, catalyzes the formation of N(4)-acetylcytidine (ac(4)C) at the wobble position of elongator tRNA(Met), using acetate and ATP as substrates. First activates an acetate ion to form acetyladenylate (Ac-AMP) and then transfers the acetyl group to tRNA to form ac(4)C34. In Streptococcus gordonii (strain Challis / ATCC 35105 / BCRC 15272 / CH1 / DL1 / V288), this protein is tRNA(Met) cytidine acetate ligase.